We begin with the raw amino-acid sequence, 408 residues long: Argininosuccinate synthase (408 aa).

Residues 9–17 (AYSGGLDTS) and A36 contribute to the ATP site. Positions 87 and 92 each coordinate L-citrulline. G117 contributes to the ATP binding site. L-aspartate-binding residues include T119, N123, and D124. N123 lines the L-citrulline pocket. R127, S176, S185, E261, and Y273 together coordinate L-citrulline.

This sequence belongs to the argininosuccinate synthase family. Type 1 subfamily. In terms of assembly, homotetramer.

The protein resides in the cytoplasm. It carries out the reaction L-citrulline + L-aspartate + ATP = 2-(N(omega)-L-arginino)succinate + AMP + diphosphate + H(+). Its pathway is amino-acid biosynthesis; L-arginine biosynthesis; L-arginine from L-ornithine and carbamoyl phosphate: step 2/3. In Deinococcus deserti (strain DSM 17065 / CIP 109153 / LMG 22923 / VCD115), this protein is Argininosuccinate synthase.